The primary structure comprises 84 residues: Small ribosomal subunit protein bS18 (84 aa).

It belongs to the bacterial ribosomal protein bS18 family. As to quaternary structure, part of the 30S ribosomal subunit. Forms a tight heterodimer with protein bS6.

Its function is as follows. Binds as a heterodimer with protein bS6 to the central domain of the 16S rRNA, where it helps stabilize the platform of the 30S subunit. The chain is Small ribosomal subunit protein bS18 from Mycobacterium sp. (strain JLS).